The sequence spans 253 residues: Endonuclease NucS (253 aa).

The protein belongs to the NucS endonuclease family.

It localises to the cytoplasm. Its function is as follows. Cleaves both 3' and 5' ssDNA extremities of branched DNA structures. The protein is Endonuclease NucS of Pyrococcus horikoshii (strain ATCC 700860 / DSM 12428 / JCM 9974 / NBRC 100139 / OT-3).